We begin with the raw amino-acid sequence, 657 residues long: Pentatricopeptide repeat-containing protein At1g11710, mitochondrial (657 aa).

The N-terminal 74 residues, 1–74, are a transit peptide targeting the mitochondrion; that stretch reads MFGHVFSRRT…REFRSSPKLA (74 aa). 14 PPR repeats span residues 147-181, 182-216, 217-251, 252-282, 290-324, 325-359, 360-394, 395-429, 430-464, 465-499, 500-530, 531-565, 568-602, and 603-637; these read SPDV…GFCV, SVHA…GYVE, NVNT…GVWP, NVVS…MGMM, NAVT…GVDC, NERT…GLVV, NTVI…NMQI, DRFT…KLVE, DIVC…GLSL, DAIS…NKTS, NLVI…MEIK, DIVT…DGEK, SLVT…GVVP, and DSIT…GVTP.

Belongs to the PPR family. P subfamily.

Its subcellular location is the mitochondrion. The chain is Pentatricopeptide repeat-containing protein At1g11710, mitochondrial from Arabidopsis thaliana (Mouse-ear cress).